The primary structure comprises 348 residues: Small ribosomal subunit protein mS45 (348 aa).

Residues 37 to 57 (SCSSSSPQSSQPTTHQQQCSS) are compositionally biased toward low complexity. The interval 37–63 (SCSSSSPQSSQPTTHQQQCSSFSTTAP) is disordered.

It belongs to the mitochondrion-specific ribosomal protein mS45 family. In terms of assembly, component of the mitochondrial small ribosomal subunit (mt-SSU). Mature N.crassa 74S mitochondrial ribosomes consist of a small (37S) and a large (54S) subunit. The 37S small subunit contains a 16S ribosomal RNA (16S mt-rRNA) and 32 different proteins. The 54S large subunit contains a 23S rRNA (23S mt-rRNA) and 42 different proteins.

It is found in the mitochondrion. Functionally, component of the mitochondrial ribosome (mitoribosome), a dedicated translation machinery responsible for the synthesis of mitochondrial genome-encoded proteins, including at least some of the essential transmembrane subunits of the mitochondrial respiratory chain. The mitoribosomes are attached to the mitochondrial inner membrane and translation products are cotranslationally integrated into the membrane. This is Small ribosomal subunit protein mS45 (mrps35) from Neurospora crassa (strain ATCC 24698 / 74-OR23-1A / CBS 708.71 / DSM 1257 / FGSC 987).